A 1337-amino-acid chain; its full sequence is Sister chromatid cohesion protein PDS5 homolog A (1337 aa).

Met-1 is modified (N-acetylmethionine). Residues 393–429 (ALVNDQLLGFVRERTLDKRWRVRKEAMMGLAQLYKKY) form an HEAT repeat. Ser-1097 is modified (phosphoserine). The residue at position 1146 (Lys-1146) is an N6-acetyllysine. The segment at 1150-1337 (ATGRKPYVRS…PAERQIDLQR (188 aa)) is disordered. Positions 1159–1180 (STGTETGSNINVNSELNPSTGN) are enriched in polar residues. A Phosphoserine modification is found at Ser-1195. Position 1208 is a phosphothreonine (Thr-1208). N6-acetyllysine is present on Lys-1211. A compositionally biased stretch (polar residues) spans 1223-1233 (SDQATQGNISS). An N6-acetyllysine modification is found at Lys-1290. Ser-1305 is modified (phosphoserine). Over residues 1321–1337 (DLAKKAAPAERQIDLQR) the composition is skewed to basic and acidic residues.

Belongs to the PDS5 family. In terms of assembly, interacts with the cohesin complex. Interacts with WAPL (via FGF motifs) or CDCA5 (via the FGF motif); the interaction is direct, cohesin-dependent and competitive. Interacts with SMC3. Interacts with TP63. As to expression, highest level in colon. Low levels in lung, ovary, breast and kidney. Reduced level in renal tumor tissue. Isoform 2 is expressed in kidney.

The protein localises to the nucleus. Probable regulator of sister chromatid cohesion in mitosis which may stabilize cohesin complex association with chromatin. May couple sister chromatid cohesion during mitosis to DNA replication. Cohesion ensures that chromosome partitioning is accurate in both meiotic and mitotic cells and plays an important role in DNA repair. This Homo sapiens (Human) protein is Sister chromatid cohesion protein PDS5 homolog A.